A 97-amino-acid polypeptide reads, in one-letter code: Small ribosomal subunit protein bS20 (97 aa).

The protein belongs to the bacterial ribosomal protein bS20 family.

Binds directly to 16S ribosomal RNA. This Prochlorococcus marinus (strain MIT 9301) protein is Small ribosomal subunit protein bS20.